A 90-amino-acid polypeptide reads, in one-letter code: Probable Fe(2+)-trafficking protein (90 aa).

It belongs to the Fe(2+)-trafficking protein family.

In terms of biological role, could be a mediator in iron transactions between iron acquisition and iron-requiring processes, such as synthesis and/or repair of Fe-S clusters in biosynthetic enzymes. The chain is Probable Fe(2+)-trafficking protein from Aeromonas salmonicida (strain A449).